The sequence spans 160 residues: Major strawberry allergen Fra a 1-E (160 aa).

Belongs to the BetVI family. Monomer. Interacts with AP. Highly expressed in roots. Expressed in open flowers. Expressed at low levels in leaves, flower buds and fruits.

Its function is as follows. Involved in the control of flavonoid biosynthesis in fruits, probably by binding directly to natural flavonoids. Binds the natural flavonoid quercetin-3-O-glucuronide with affinities in the low micromolar range. The polypeptide is Major strawberry allergen Fra a 1-E (Fragaria ananassa (Strawberry)).